The primary structure comprises 553 residues: 4-coumarate--CoA ligase (553 aa).

Residues Ser-198, Ser-199, Gly-200, Thr-201, Thr-202, and Lys-206 each contribute to the ATP site. The (E)-4-coumaroyl-AMP site is built by Tyr-248 and Ser-252. Lys-269 contacts CoA. The tract at residues 271-340 (EIVPFLELIQ…AKFPNAKLGQ (70 aa)) is SBD1. (E)-4-coumaroyl-AMP is bound by residues Ala-318, Gln-340, Gly-341, Thr-345, and Met-353. 3 residues coordinate ATP: Gln-340, Gly-341, and Thr-345. The segment at 341–408 (GYGMTEAGPV…IRGDQIMKGY (68 aa)) is SBD2. Residues Asp-429 and Arg-444 each contribute to the ATP site. Lys-446 and Lys-450 together coordinate (E)-4-coumaroyl-AMP. Residues Lys-452 and Gly-453 each coordinate CoA. Lys-535 serves as a coordination point for ATP.

It belongs to the ATP-dependent AMP-binding enzyme family. Requires Mg(2+) as cofactor.

It carries out the reaction (E)-4-coumarate + ATP + CoA = (E)-4-coumaroyl-CoA + AMP + diphosphate. It catalyses the reaction (E)-4-coumarate + ATP + H(+) = (E)-4-coumaroyl-AMP + diphosphate. The catalysed reaction is (E)-4-coumaroyl-AMP + CoA = (E)-4-coumaroyl-CoA + AMP + H(+). The protein operates within phytoalexin biosynthesis; 3,4',5-trihydroxystilbene biosynthesis; 3,4',5-trihydroxystilbene from trans-4-coumarate: step 1/2. Functionally, carboxylate--CoA ligase that may use 4-coumarate as substrate. Follows a two-step reaction mechanism, wherein the carboxylate substrate first undergoes adenylation by ATP, followed by a thioesterification in the presence of CoA to yield the final CoA thioester. The polypeptide is 4-coumarate--CoA ligase (Vanilla planifolia (Vanilla)).